A 228-amino-acid polypeptide reads, in one-letter code: Ephrin-A5 (228 aa).

Positions 1–20 are cleaved as a signal peptide; that stretch reads MPHVEMLLLAVAALWVCVRG. One can recognise an Ephrin RBD domain in the interval 29–162; that stretch reads ADRYAVYWNS…KLKVFVRPAN (134 aa). N-linked (GlcNAc...) asparagine glycosylation occurs at asparagine 37. Cystine bridges form between cysteine 62-cysteine 102 and cysteine 90-cysteine 151. Residue asparagine 203 is the site of GPI-anchor amidated asparagine attachment. Positions 204-228 are cleaved as a propeptide — removed in mature form; it reads AAQTPRIPIRLLATLLFLLAMLLIL.

It belongs to the ephrin family. As to expression, expressed in a graded fashion across the tectum being more strongly expressed towards the posterior pole.

It localises to the cell membrane. Functionally, cell surface GPI-bound ligand for Eph receptors, a family of receptor tyrosine kinases which are crucial for migration, repulsion and adhesion during neuronal, vascular and epithelial development. Binds promiscuously Eph receptors residing on adjacent cells, leading to contact-dependent bidirectional signaling into neighboring cells. Induces compartmentalized signaling within a caveolae-like membrane microdomain when bound to the extracellular domain of its cognate receptor. This signaling event requires the activity of the Fyn tyrosine kinase. Activates the EPHA3 receptor to regulate cell-cell adhesion and cytoskeletal organization. With the receptor EPHA2 may regulate lens fiber cells shape and interactions and be important for lens transparency maintenance. May function actively to stimulate axon fasciculation. Induces growth cone collapse and repulsion of retinal ganglion cell axons. The protein is Ephrin-A5 (EFNA5) of Gallus gallus (Chicken).